The primary structure comprises 134 residues: MHIALIAHDEKKDLMEEFAIAYKHLLEPHQLYATGTTGLRIIEATGLSVHRFKSGPLGGDQQIGARISENKMDLVIFLRDPLTAQPHEPDVTALIRLCDVYEIPLATNIGTAEILIRGLESGFLDWRDLRRNDE.

An MGS-like domain is found at 1–134 (MHIALIAHDE…DWRDLRRNDE (134 aa)). Substrate-binding positions include His8, Lys12, 34 to 37 (TGTT), and 54 to 55 (SG). Catalysis depends on Asp60, which acts as the Proton donor/acceptor. Position 87 (His87) interacts with substrate.

Belongs to the methylglyoxal synthase family.

The enzyme catalyses dihydroxyacetone phosphate = methylglyoxal + phosphate. Functionally, catalyzes the formation of methylglyoxal from dihydroxyacetone phosphate. This chain is Methylglyoxal synthase, found in Listeria welshimeri serovar 6b (strain ATCC 35897 / DSM 20650 / CCUG 15529 / CIP 8149 / NCTC 11857 / SLCC 5334 / V8).